We begin with the raw amino-acid sequence, 1048 residues long: FERM, ARHGEF and pleckstrin domain-containing protein 1 (1048 aa).

The tract at residues 1–37 (MGEIEQKPTPASRLGAPENSGISTLERGQKPPPTPSG) is disordered. Serine 20 and serine 23 each carry phosphoserine. Threonine 24 carries the post-translational modification Phosphothreonine. An FERM domain is found at 40 to 320 (MTVKIQMLDD…EHHAFFRLFE (281 aa)). Phosphoserine occurs at positions 340, 373, 389, 403, 427, 433, and 437. The segment at 361-536 (FERKHSKIHS…TDDEEEGRRK (176 aa)) is disordered. The segment covering 371–395 (TRSLVSQPTAPNSEVPKQSPQSASL) has biased composition (polar residues). 2 stretches are compositionally biased toward polar residues: residues 472–491 (STGS…NSQG) and 498–513 (VTLS…QASP). Phosphoserine occurs at positions 512 and 516. Residues 542 to 733 (KAYYIAKEVS…TEMVAQLHGT (192 aa)) enclose the DH domain. The PH 1 domain occupies 762–859 (EFIRLGSLSK…WMEDIQMAID (98 aa)). Serine 836, serine 875, and serine 881 each carry phosphoserine. The tract at residues 865 to 907 (NGPTPELLASSPPDNKSPDEATAADQESEDDLSASRTSLERQA) is disordered. Threonine 886 carries the phosphothreonine modification. Phosphoserine occurs at positions 892, 899, and 902. A PH 2 domain is found at 935–1032 (ENQLSGNLLR…WMEVIRSATS (98 aa)).

In terms of assembly, interacts with CADM1. Interacts with RAC1. In terms of tissue distribution, detected in brain cortex, hippocampus, striatum, olfactory bulb, cerebellum and hindbrain (at protein level).

It localises to the cell membrane. Its subcellular location is the synapse. The protein localises to the synaptosome. It is found in the cytoplasm. The protein resides in the cytosol. It localises to the cell projection. Its subcellular location is the filopodium. The protein localises to the dendrite. It is found in the dendritic spine. Its function is as follows. Functions as a guanine nucleotide exchange factor for RAC1. May play a role in semaphorin signaling. Plays a role in the assembly and disassembly of dendritic filopodia, the formation of dendritic spines, regulation of dendrite length and ultimately the formation of synapses. This chain is FERM, ARHGEF and pleckstrin domain-containing protein 1 (Farp1), found in Mus musculus (Mouse).